Consider the following 1308-residue polypeptide: Receptor tyrosine-protein kinase erbB-4 (1308 aa).

A signal peptide spans 1–25 (MKPATGLWVWVSLLVAAGTVQPSDS). Residues 26 to 651 (QSVCAGTENK…STLPQHARTP (626 aa)) lie on the Extracellular side of the membrane. C29 and C56 are oxidised to a cystine. N-linked (GlcNAc...) asparagine glycans are attached at residues N138, N174, and N181. Cystine bridges form between C156–C186, C189–C197, C193–C205, C213–C221, C217–C229, C230–C238, C234–C246, C249–C258, C262–C289, C293–C304, C308–C323, and C326–C330. A glycan (N-linked (GlcNAc...) asparagine) is linked at N253. N358, N410, N473, and N495 each carry an N-linked (GlcNAc...) asparagine glycan. 10 disulfide bridges follow: C503–C512, C507–C520, C523–C532, C536–C552, C555–C569, C559–C577, C580–C589, C593–C614, C617–C625, and C621–C633. An N-linked (GlcNAc...) asparagine glycan is attached at N548. An N-linked (GlcNAc...) asparagine glycan is attached at N576. Residue N620 is glycosylated (N-linked (GlcNAc...) asparagine). Residues 652 to 675 (LIAAGVIGGLFILVIVGLTFAVYV) traverse the membrane as a helical segment. Residues 676–684 (RRKSIKKKR) carry the Nuclear localization signal motif. The Cytoplasmic segment spans residues 676-1308 (RRKSIKKKRA…PPYRHRNTVV (633 aa)). In terms of domain architecture, Protein kinase spans 718–985 (LKRVKVLGSG…RMARDPQRYL (268 aa)). ATP-binding positions include 724-732 (LGSGAFGTV), K751, 797-799 (QLM), and 843-848 (DLAARN). D843 acts as the Proton acceptor in catalysis. Residues Y875, Y1035, Y1056, Y1150, Y1162, Y1188, Y1202, Y1242, Y1258, and Y1284 each carry the phosphotyrosine; by autocatalysis modification. 2 short sequence motifs (PPxY motif) span residues 1032–1035 (PPIY) and 1053–1056 (PPAY). The segment at 1117 to 1150 (PHVQEDSSTQRYSADPTVFAPERSPRGELDEEGY) is disordered. The short motif at 1298–1301 (PPPY) is the PPxY motif 3 element. Residues 1306 to 1308 (TVV) carry the PDZ-binding motif.

The protein belongs to the protein kinase superfamily. Tyr protein kinase family. EGF receptor subfamily. In terms of assembly, monomer in the absence of bound ligand. Homodimer or heterodimer with another ERBB family member upon ligand binding, thus forming heterotetramers. Interacts with EGFR and ERBB2. Interacts with CBFA2T3. Interacts with DLG2 (via its PDZ domain), DLG3 (via its PDZ domain), DLG4 (via its PDZ domain) and SNTB2 (via its PDZ domain). Interacts with MUC1. Interacts (via its PPxy motifs) with WWOX. Interacts (via the PPxY motif 3 of isoform JM-A CYT-2) with YAP1 (via the WW domain 1 of isoform 1). Interacts (isoform JM-A CYT-1 and isoform JM-B CYT-1) with WWP1. Interacts (via its intracellular domain) with TRIM28. Interacts (via the intracellular domains of both CYT-1 and CYT-2 isoforms) with KAP1; the interaction does not phosphorylate KAP1 but represses ERBB4-mediated transcriptional activity. Interacts with PRPU, DDX23, MATR3, RBM15, ILF3, KAP1, U5S1, U2SURP, ITCH, HNRNPU, AP2A1, NULC, LEO1, WWP2, IGHG1, HXK1, GRB7 and SRRT. Interacts (phosphorylated isoform JM-A CYT-1 and isoform JM-B CYT-1) with PIK3R1. Interacts with SHC1. Interacts with GRB2. Interacts (soluble intracellular domain) with STAT5A. Interacts (soluble intracellular domain) with BCL2. Interacts (phosphorylated) with STAT1. Isoform JM-A CYT-1 and isoform JM-A CYT-2 are processed by ADAM17. Proteolytic processing in response to ligand or 12-O-tetradecanoylphorbol-13-acetate stimulation results in the production of 120 kDa soluble receptor forms and intermediate membrane-anchored 80 kDa fragments (m80HER4), which are further processed by a presenilin-dependent gamma-secretase to release a cytoplasmic intracellular domain (E4ICD; E4ICD1/s80Cyt1 or E4ICD2/s80Cyt2, depending on the isoform). Membrane-anchored 80 kDa fragments of the processed isoform JM-A CYT-1 are more readily degraded by the proteasome than fragments of isoform JM-A CYT-2, suggesting a prevalence of E4ICD2 over E4ICD1. Isoform JM-B CYT-1 and isoform JM-B CYT-2 lack the ADAM17 cleavage site and are not processed by ADAM17, precluding further processing by gamma-secretase. In terms of processing, autophosphorylated on tyrosine residues in response to ligand binding. Autophosphorylation occurs in trans, i.e. one subunit of the dimeric receptor phosphorylates tyrosine residues on the other subunit. Ligands trigger phosphorylation at specific tyrosine residues, thereby creating binding sites for scaffold proteins and effectors. Constitutively phosphorylated at a basal level when overexpressed in heterologous systems; ligand binding leads to increased phosphorylation. Phosphorylation at Tyr-1035 is important for interaction with STAT1. Phosphorylation at Tyr-1056 is important for interaction with PIK3R1. Phosphorylation at Tyr-1242 is important for interaction with SHC1. Phosphorylation at Tyr-1188 may also contribute to the interaction with SHC1. Isoform JM-A CYT-2 is constitutively phosphorylated on tyrosine residues in a ligand-independent manner. E4ICD2 but not E4ICD1 is phosphorylated on tyrosine residues. Post-translationally, ubiquitinated. During mitosis, the ERBB4 intracellular domain is ubiquitinated by the APC/C complex and targeted to proteasomal degradation. Isoform JM-A CYT-1 and isoform JM-B CYT-1 are ubiquitinated by WWP1. The ERBB4 intracellular domain (E4ICD1) is ubiquitinated, and this involves NEDD4. In terms of tissue distribution, expressed at highest levels in brain, heart, kidney, in addition to skeletal muscle, parathyroid, cerebellum, pituitary, spleen, testis and breast. Lower levels in thymus, lung, salivary gland, and pancreas. Isoform JM-A CYT-1 and isoform JM-B CYT-1 are expressed in cerebellum, but only the isoform JM-B is expressed in the heart.

It localises to the cell membrane. The protein localises to the nucleus. It is found in the mitochondrion. The catalysed reaction is L-tyrosyl-[protein] + ATP = O-phospho-L-tyrosyl-[protein] + ADP + H(+). Its activity is regulated as follows. Binding of a cognate ligand leads to dimerization and activation by autophosphorylation on tyrosine residues. In vitro kinase activity is increased by Mg(2+). Inhibited by PD153035, lapatinib, gefitinib (iressa, ZD1839), AG1478 and BIBX1382BS. In terms of biological role, tyrosine-protein kinase that plays an essential role as cell surface receptor for neuregulins and EGF family members and regulates development of the heart, the central nervous system and the mammary gland, gene transcription, cell proliferation, differentiation, migration and apoptosis. Required for normal cardiac muscle differentiation during embryonic development, and for postnatal cardiomyocyte proliferation. Required for normal development of the embryonic central nervous system, especially for normal neural crest cell migration and normal axon guidance. Required for mammary gland differentiation, induction of milk proteins and lactation. Acts as cell-surface receptor for the neuregulins NRG1, NRG2, NRG3 and NRG4 and the EGF family members BTC, EREG and HBEGF. Ligand binding triggers receptor dimerization and autophosphorylation at specific tyrosine residues that then serve as binding sites for scaffold proteins and effectors. Ligand specificity and signaling is modulated by alternative splicing, proteolytic processing, and by the formation of heterodimers with other ERBB family members, thereby creating multiple combinations of intracellular phosphotyrosines that trigger ligand- and context-specific cellular responses. Mediates phosphorylation of SHC1 and activation of the MAP kinases MAPK1/ERK2 and MAPK3/ERK1. Isoform JM-A CYT-1 and isoform JM-B CYT-1 phosphorylate PIK3R1, leading to the activation of phosphatidylinositol 3-kinase and AKT1 and protect cells against apoptosis. Isoform JM-A CYT-1 and isoform JM-B CYT-1 mediate reorganization of the actin cytoskeleton and promote cell migration in response to NRG1. Isoform JM-A CYT-2 and isoform JM-B CYT-2 lack the phosphotyrosine that mediates interaction with PIK3R1, and hence do not phosphorylate PIK3R1, do not protect cells against apoptosis, and do not promote reorganization of the actin cytoskeleton and cell migration. Proteolytic processing of isoform JM-A CYT-1 and isoform JM-A CYT-2 gives rise to the corresponding soluble intracellular domains (4ICD) that translocate to the nucleus, promote nuclear import of STAT5A, activation of STAT5A, mammary epithelium differentiation, cell proliferation and activation of gene expression. The ERBB4 soluble intracellular domains (4ICD) colocalize with STAT5A at the CSN2 promoter to regulate transcription of milk proteins during lactation. The ERBB4 soluble intracellular domains can also translocate to mitochondria and promote apoptosis. The protein is Receptor tyrosine-protein kinase erbB-4 (ERBB4) of Homo sapiens (Human).